Consider the following 158-residue polypeptide: Small ribosomal subunit protein uS7 (158 aa).

The protein belongs to the universal ribosomal protein uS7 family. Part of the 30S ribosomal subunit. Contacts proteins S9 and S11.

Functionally, one of the primary rRNA binding proteins, it binds directly to 16S rRNA where it nucleates assembly of the head domain of the 30S subunit. Is located at the subunit interface close to the decoding center, probably blocks exit of the E-site tRNA. The sequence is that of Small ribosomal subunit protein uS7 from Gluconobacter oxydans (strain 621H) (Gluconobacter suboxydans).